A 130-amino-acid polypeptide reads, in one-letter code: MKYIAIDLGLKRIGLAYSAHKDLVTPLKAVERKNRDQAARDVKKTLIEWEVDAVVVGIPLGGSSEDEMRRRVAHFMNLVAFEGEIFYQDESNSSIEAESMMRGEIKYIRDGRIDSISAMIILQRYLRQKC.

The protein belongs to the YqgF nuclease family.

It is found in the cytoplasm. Could be a nuclease involved in processing of the 5'-end of pre-16S rRNA. The protein is Putative pre-16S rRNA nuclease of Sulfurimonas denitrificans (strain ATCC 33889 / DSM 1251) (Thiomicrospira denitrificans (strain ATCC 33889 / DSM 1251)).